A 646-amino-acid polypeptide reads, in one-letter code: MIGAFKRNRGSSQSFAKECQPSTLKANLEVAKELPFSDRRDFEDATQGYIGSLSDEQIIGPDGGVVWCMKSYGFLEPETPANTVNPSLWRQAQLNAIHGLFKITDNVYQVRGLDISNMTIIEGNTSLIIIDTLFTTETAQESLKLYYRHRPQKPVRTVIYTHSHSDHYGGVKGIVKEADVKSGEVQIIAPVGFMESVVAENILAGNAMHRRSQYQFGMLLSPSVKGHVDCGIGKAASHGTVTLIAPTIIIEEPVEERTIDGVDFVFQLAPGSEAPSEMLIYMPQQRVLNMAEDVTHHMHNLYALRGVEVRDGNQWAKYIDAARVAFGSKTDVLIAQHHWPTTGQMRINELLKKQRDMYKFIHDQTLRLLNQGYTSRDIAETLRMPSSLEQEWSTRGYYGTLSHNVKAVYQKYLGWYDANPANLNPLPPVAYAKKAVEYMGGADAVLARAYKDFQKGEFRWVASVVNQLVFADPNNHQARELCADALEQLGYQAEASTWRNAYLVGAMELRQGVPKRRSTGKRNNIAVLNNEMFFDFLAVRLNATKAEGKIIVSNWCFINSNERFVITLENCALTYIQGWQTDADATITLKRTTFEALLANEITMVDFLRSKEVEIEGNRLRIEELLKLFDDFDQSFPVVEPMGGST.

Met1 bears the N-acetylmethionine mark. Positions 162, 164, 166, 167, 273, 292, and 337 each coordinate Zn(2+).

This sequence belongs to the metallo-beta-lactamase superfamily. Type III sulfatase family. Zn(2+) serves as cofactor.

Functionally, alkyl/aryl-sulfatase. Enables the use of SDS and 4-nitrocatechol as sulfur source. The sequence is that of Alkyl/aryl-sulfatase BDS1 (BDS1) from Saccharomyces cerevisiae (strain ATCC 204508 / S288c) (Baker's yeast).